Reading from the N-terminus, the 1641-residue chain is Ophiophagus venom factor (1641 aa).

A signal peptide spans M1–G22. N181 and N209 each carry an N-linked (GlcNAc...) asparagine glycan. Positions 507, 530, 531, and 533 each coordinate Mg(2+). Disulfide bonds link C535–C796, C604–C639, C672–C699, C673–C706, C686–C707, C852–C1491, C1336–C1467, C1367–C1436, C1484–C1489, C1496–C1568, C1515–C1639, and C1615–C1624. Positions R645–N728 are excised as a propeptide. Residues S649–R727 are C3a-like domain. The region spanning C672–C707 is the Anaphylatoxin-like domain. A factor B binding site region spans residues E731–P742. The propeptide occupies H981–Y1259. Residues H981 to Y1259 form a C3d-like domain region. Residues C989–Q992 constitute a cross-link (isoglutamyl cysteine thioester (Cys-Gln)). Positions V1186–T1249 are factor H binding site. Positions C1496–C1639 constitute an NTR domain.

It belongs to the venom complement C3 homolog family. Heterotrimer of alpha, beta and gamma chains; disulfide-linked. May be active with factor B in the presence of factor D. First processed by the removal of 4 Arg residues by furin-type protease, forming two chains, alpha and gamma/beta precursor, linked by a disulfide bond. Probably, a cobrin-like protease cleaves the C3a-like domain and then the C3d-like domain, generating the mature venom factor (OVF). In terms of processing, the beta chain is not glycosylated. As to expression, expressed by the venom gland.

Its subcellular location is the secreted. Its function is as follows. Complement-activating protein in cobra venom. It is a structural and functional analog of complement component C3b, the activated form of C3. It binds factor B (CFB), which is subsequently cleaved by factor D (CFD) to form the bimolecular complex OVF/Bb. OVF/Bb is a C3/C5 convertase that cleaves both complement components C3 and C5. Structurally, it resembles the C3b degradation product C3c, which is not able to form a C3/C5 convertase. Unlike C3b/Bb, OVF/Bb is a stable complex and completely resistant to the actions of complement regulatory factors H (CFH) and I (CFI). Therefore, OVF continuously activates complement. As a result, OVF exhibits complement-depleting activity. This chain is Ophiophagus venom factor, found in Ophiophagus hannah (King cobra).